A 237-amino-acid polypeptide reads, in one-letter code: Sugar fermentation stimulation protein homolog (237 aa).

Belongs to the SfsA family.

In Thioalkalivibrio sulfidiphilus (strain HL-EbGR7), this protein is Sugar fermentation stimulation protein homolog.